A 208-amino-acid polypeptide reads, in one-letter code: Small ribosomal subunit protein uS4 (208 aa).

The S4 RNA-binding domain maps to 98 to 163 (RRLDNVVYRL…KPRFIEIKEK (66 aa)).

It belongs to the universal ribosomal protein uS4 family. In terms of assembly, part of the 30S ribosomal subunit. Contacts protein S5. The interaction surface between S4 and S5 is involved in control of translational fidelity.

Its function is as follows. One of the primary rRNA binding proteins, it binds directly to 16S rRNA where it nucleates assembly of the body of the 30S subunit. Functionally, with S5 and S12 plays an important role in translational accuracy. The polypeptide is Small ribosomal subunit protein uS4 (Caldicellulosiruptor saccharolyticus (strain ATCC 43494 / DSM 8903 / Tp8T 6331)).